The following is a 177-amino-acid chain: UPF0114 protein HPAG1_0183 (177 aa).

Helical transmembrane passes span 15–35 (WLLA…GYVF), 54–74 (LVLS…VLMV), 102–122 (FNAL…IFLL), and 145–165 (PIFW…LAAV).

It belongs to the UPF0114 family.

Its subcellular location is the cell membrane. This chain is UPF0114 protein HPAG1_0183, found in Helicobacter pylori (strain HPAG1).